We begin with the raw amino-acid sequence, 389 residues long: Flap endonuclease 1 (389 aa).

The segment at 1–110 (MGIKGLMKLL…GELAKRSDRR (110 aa)) is N-domain. Asp-35 lines the Mg(2+) pocket. 2 residues coordinate DNA: Arg-48 and Arg-76. Asp-92 is a binding site for Mg(2+). The interval 103 to 124 (LAKRSDRRQEAQKALEEATEKG) is disordered. The tract at residues 128–259 (DIDRFNKRLV…KKAYAGIKEH (132 aa)) is I-domain. Mg(2+) contacts are provided by Glu-164, Glu-166, Asp-185, and Asp-187. Glu-164 is a binding site for DNA. DNA is bound by residues Gly-237 and Asp-239. Asp-239 is a Mg(2+) binding site. Residues 350–358 (SQKRLDSFF) form an interaction with PCNA region. The disordered stretch occupies residues 362 to 389 (PSANGAKKRKAPAAKGGKKAATAKKGKK). Over residues 367-389 (AKKRKAPAAKGGKKAATAKKGKK) the composition is skewed to basic residues.

The protein belongs to the XPG/RAD2 endonuclease family. FEN1 subfamily. In terms of assembly, interacts with PCNA. Three molecules of FEN1 bind to one PCNA trimer with each molecule binding to one PCNA monomer. PCNA stimulates the nuclease activity without altering cleavage specificity. It depends on Mg(2+) as a cofactor. Phosphorylated. Phosphorylation upon DNA damage induces relocalization to the nuclear plasma.

It is found in the nucleus. The protein localises to the nucleolus. Its subcellular location is the nucleoplasm. The protein resides in the mitochondrion. Structure-specific nuclease with 5'-flap endonuclease and 5'-3' exonuclease activities involved in DNA replication and repair. During DNA replication, cleaves the 5'-overhanging flap structure that is generated by displacement synthesis when DNA polymerase encounters the 5'-end of a downstream Okazaki fragment. It enters the flap from the 5'-end and then tracks to cleave the flap base, leaving a nick for ligation. Also involved in the long patch base excision repair (LP-BER) pathway, by cleaving within the apurinic/apyrimidinic (AP) site-terminated flap. Acts as a genome stabilization factor that prevents flaps from equilibrating into structures that lead to duplications and deletions. Also possesses 5'-3' exonuclease activity on nicked or gapped double-stranded DNA, and exhibits RNase H activity. Also involved in replication and repair of rDNA and in repairing mitochondrial DNA. The protein is Flap endonuclease 1 of Phytophthora infestans (strain T30-4) (Potato late blight agent).